Reading from the N-terminus, the 149-residue chain is MPYYAALGLDVGRRRIGVAGCDRLGITVQGLTTIVRRDFASDVAAISAIAKERQVELLVIGLPYSMDGSLGSQAKQTQRFATRLSKALQLPITYVDERLTSFEAEEMIKAEGRSPSRDKGAIDRKAAALILQQWLDEQREPRRFGSTQH.

It belongs to the YqgF nuclease family.

It is found in the cytoplasm. Functionally, could be a nuclease involved in processing of the 5'-end of pre-16S rRNA. The sequence is that of Putative pre-16S rRNA nuclease from Synechococcus elongatus (strain ATCC 33912 / PCC 7942 / FACHB-805) (Anacystis nidulans R2).